Here is a 706-residue protein sequence, read N- to C-terminus: Signal transducer and activator of transcription 1 (706 aa).

One can recognise an SH2 domain in the interval 477–574 (WCIGFISKND…EEMLRFFESE (98 aa)).

This sequence belongs to the transcription factor STAT family. As to quaternary structure, forms a homodimer or a heterodimer with a related family member. As to expression, expressed in adult and larval pharynx, head ganglia, tail ganglia, ventral nerve cord and body muscles.

It is found in the cytoplasm. Its subcellular location is the nucleus. Functionally, carries out a dual function: signal transduction and activation of transcription. Activated STAT proteins play a role in repression of dauer formation. Neuronal expression is held in check by negative signals through the TGF-beta pathway that target the daf-3 transcription factor. This chain is Signal transducer and activator of transcription 1, found in Caenorhabditis elegans.